A 473-amino-acid chain; its full sequence is Double-stranded RNA-binding protein 7 (473 aa).

Residues 1–10 are compositionally biased toward pro residues; it reads MDMPPTPLPP. The interval 1-22 is disordered; the sequence is MDMPPTPLPPETANTSPAPNGA. 2 DRBM domains span residues 33 to 102 and 118 to 185; these read VFKS…EIVK and LCKN…AIQG. 3 stretches are compositionally biased toward basic and acidic residues: residues 286-307, 317-327, and 416-427; these read KRVE…ENQH, DEARVEQEPSR, and VDARVVKEESPR. 2 disordered regions span residues 286–329 and 393–473; these read KRVE…SRDI and QLNE…MSEE. A compositionally biased stretch (polar residues) spans 433–450; the sequence is EATNMKETPKNSAVCNSP.

Binds double-stranded RNA. The sequence is that of Double-stranded RNA-binding protein 7 (DRB7) from Oryza sativa subsp. japonica (Rice).